The chain runs to 150 residues: Large ribosomal subunit protein uL13 (150 aa).

Belongs to the universal ribosomal protein uL13 family. As to quaternary structure, part of the 50S ribosomal subunit.

In terms of biological role, this protein is one of the early assembly proteins of the 50S ribosomal subunit, although it is not seen to bind rRNA by itself. It is important during the early stages of 50S assembly. The sequence is that of Large ribosomal subunit protein uL13 from Chlamydia muridarum (strain MoPn / Nigg).